The following is a 633-amino-acid chain: Chaperone protein DnaK (633 aa).

Thr-196 is modified (phosphothreonine; by autocatalysis). Positions 594–633 (NLYGQPGAEPQPETNGHAGGSKGGDGAVNAEYEVIDGDDK) are disordered. Positions 610-619 (HAGGSKGGDG) are enriched in gly residues.

This sequence belongs to the heat shock protein 70 family.

Functionally, acts as a chaperone. The polypeptide is Chaperone protein DnaK (Chlorobaculum tepidum (strain ATCC 49652 / DSM 12025 / NBRC 103806 / TLS) (Chlorobium tepidum)).